Consider the following 91-residue polypeptide: Molybdopterin synthase sulfur carrier subunit (91 aa).

G91 carries the post-translational modification 1-thioglycine; alternate. Position 91 is a glycyl adenylate; alternate (G91).

It belongs to the MoaD family. MOCS2A subfamily. In terms of assembly, heterotetramer; composed of 2 small (MOCS2A) and 2 large (MOCS2B) subunits. Post-translationally, C-terminal thiocarboxylation occurs in 2 steps, it is first acyl-adenylated (-COAMP) via the hesA/moeB/thiF part of uba4, then thiocarboxylated (-COSH) via the rhodanese domain of uba4.

The protein localises to the cytoplasm. Its pathway is cofactor biosynthesis; molybdopterin biosynthesis. In terms of biological role, acts as a sulfur carrier required for molybdopterin biosynthesis. Component of the molybdopterin synthase complex that catalyzes the conversion of precursor Z into molybdopterin by mediating the incorporation of 2 sulfur atoms into precursor Z to generate a dithiolene group. In the complex, serves as sulfur donor by being thiocarboxylated (-COSH) at its C-terminus by uba4. After interaction with MOCS2B, the sulfur is then transferred to precursor Z to form molybdopterin. This chain is Molybdopterin synthase sulfur carrier subunit, found in Emericella nidulans (strain FGSC A4 / ATCC 38163 / CBS 112.46 / NRRL 194 / M139) (Aspergillus nidulans).